Reading from the N-terminus, the 343-residue chain is Probable 3',5'-cyclic-nucleotide phosphodiesterase (343 aa).

The signal sequence occupies residues 1–36; that stretch reads MKYLSIKSASDKIKSGLLKTGVILSFSLFSSLSTAA.

This sequence belongs to the cyclic nucleotide phosphodiesterase class-II family.

Its subcellular location is the periplasm. The catalysed reaction is a nucleoside 3',5'-cyclic phosphate + H2O = a nucleoside 5'-phosphate + H(+). The polypeptide is Probable 3',5'-cyclic-nucleotide phosphodiesterase (cpdP) (Yersinia pestis).